The chain runs to 194 residues: Outer membrane protein A (194 aa).

Positions 1–24 (MNKPSKFALALAFAAVTASGVASA) are cleaved as a signal peptide. Residues 30 to 38 (WRNPYGNVW) traverse the membrane as a beta stranded segment. The region spanning 77-193 (MAAKVVFNAD…RVEIEIVGSR (117 aa)) is the OmpA-like domain.

The protein belongs to the outer membrane OOP (TC 1.B.6) superfamily.

The protein localises to the cell outer membrane. Its function is as follows. Structural protein that may protect the integrity of the bacterium. This Bordetella avium protein is Outer membrane protein A.